The following is a 686-amino-acid chain: Chondroitin proteoglycan 1 (686 aa).

The N-terminal stretch at 1–18 (MLPKSVLIVAFLVASSSA) is a signal peptide. Asn46 carries N-linked (GlcNAc...) asparagine glycosylation. The region spanning 63 to 120 (DTDCSTKEDGLYAIGGCSPQFLTCSGGIARIMDCPANLIYDQRIIACEYSYNVPECSG) is the Chitin-binding type-2 1 domain. Cys96 and Cys109 are disulfide-bonded. Residue Asn143 is glycosylated (N-linked (GlcNAc...) asparagine). The 58-residue stretch at 228–285 (DKTCNGKADGFYSFGQCSDHYIACSNGYTIPMQCPARLSFDEARVICDYTMNVPECQN) folds into the Chitin-binding type-2 2 domain. A disulfide bridge connects residues Cys261 and Cys274. A disordered region spans residues 284–312 (QNGSGNYEGSAEETTTEASGELPYSNGYG). N-linked (GlcNAc...) asparagine glycosylation is found at Asn285, Asn635, and Asn664. The interval 658–686 (KLRSATNRTSTKEATTRTQNMHAHYHRNH) is disordered.

Its function is as follows. Required for polar body extrusion during cytokinesis in embryo development. Affects cortical granule size. Shown to have roles in meiotic chromosome segregation, osmotic barrier function and polarization in conjunction with cpg-2. Binds chitin. In Caenorhabditis briggsae, this protein is Chondroitin proteoglycan 1 (cpg-1).